The primary structure comprises 429 residues: 3-phosphoshikimate 1-carboxyvinyltransferase (429 aa).

Positions 20, 21, and 25 each coordinate 3-phosphoshikimate. Lysine 20 contributes to the phosphoenolpyruvate binding site. Residues glycine 89 and arginine 118 each contribute to the phosphoenolpyruvate site. 6 residues coordinate 3-phosphoshikimate: serine 164, serine 165, glutamine 166, serine 192, aspartate 311, and lysine 338. Glutamine 166 is a phosphoenolpyruvate binding site. The active-site Proton acceptor is aspartate 311. Arginine 342 and arginine 384 together coordinate phosphoenolpyruvate.

Belongs to the EPSP synthase family. In terms of assembly, monomer.

Its subcellular location is the cytoplasm. The catalysed reaction is 3-phosphoshikimate + phosphoenolpyruvate = 5-O-(1-carboxyvinyl)-3-phosphoshikimate + phosphate. It participates in metabolic intermediate biosynthesis; chorismate biosynthesis. Catalyzes the transfer of the enolpyruvyl moiety of phosphoenolpyruvate (PEP) to the 5-hydroxyl of shikimate-3-phosphate (S3P) to produce enolpyruvyl shikimate-3-phosphate and inorganic phosphate. This chain is 3-phosphoshikimate 1-carboxyvinyltransferase, found in Methanococcus maripaludis (strain C5 / ATCC BAA-1333).